We begin with the raw amino-acid sequence, 270 residues long: Transmembrane protein 176B (270 aa).

4 helical membrane-spanning segments follow: residues 65–85 (LALGVTQILLGVVSCVLGVCL), 95–115 (ASGCAFWAGSVVIAAGAGAIV), 127–147 (ISSLLTLAGFATAMAAVVLCV), and 209–229 (LFLAVCVLKVIVSLVSLGVGL). Phosphoserine is present on residues Ser236, Ser245, Ser254, and Ser258. Residues 237-270 (SQPLNEEGSEKRLLGENSVPPSPSREQTSTAIVL) are disordered. A compositionally biased stretch (polar residues) spans 260 to 270 (SREQTSTAIVL).

Belongs to the TMEM176 family. As to expression, expressed in lung and dermal fibroblasts.

It localises to the nucleus membrane. Functionally, may play a role in the process of maturation of dendritic cells. Required for the development of cerebellar granule cells. The chain is Transmembrane protein 176B (TMEM176B) from Homo sapiens (Human).